The sequence spans 252 residues: Transmembrane ascorbate-dependent reductase CYB561 (252 aa).

Methionine 1 bears the N-acetylmethionine mark. Topologically, residues 1–17 (MEGPASPAPAPGALPYY) are cytoplasmic. A helical transmembrane segment spans residues 18-38 (VAFSQLLGLTVVAMTGAWLGM). The 202-residue stretch at 20–221 (FSQLLGLTVV…FATVVLYILT (202 aa)) folds into the Cytochrome b561 domain. Residues 39–52 (YRGGIAWESALQFN) lie on the Vesicular side of the membrane. A helical membrane pass occupies residues 53 to 73 (VHPLCMVIGLVFLQGDALLVY). Residues histidine 54, arginine 74, and lysine 81 each coordinate heme b. The Cytoplasmic portion of the chain corresponds to 74–86 (RVFRNEAKRTTKV). L-ascorbate is bound by residues lysine 81 and lysine 85. A helical membrane pass occupies residues 87–107 (LHGLLHVFAFVIALVGLVAVF). Residues histidine 88, 117 to 120 (DLYS), and histidine 122 contribute to the heme b site. At 108–125 (EHHRKKGYADLYSLHSWC) the chain is on the vesicular side. Residues 126 to 146 (GILVFALFFAQWLVGFSFFLF) traverse the membrane as a helical segment. The Cytoplasmic segment spans residues 147 to 159 (PGASFSLRSRYRP). Residue arginine 154 coordinates L-ascorbate. The chain crosses the membrane as a helical span at residues 160-180 (QHVFFGAAIFLLSVATALLGL). Heme b-binding residues include histidine 161 and glutamate 182. At 181–199 (KEALLFELGTKYSTFEPEG) the chain is on the vesicular side. Residues 200–220 (VLANVLGLLLAAFATVVLYIL) traverse the membrane as a helical segment. At 221–252 (TRADWKRPLQAEEQALSMDFKTLTEGDSPSSQ) the chain is on the cytoplasmic side. Lysine 226 is a heme b binding site. Serine 248 and serine 250 each carry phosphoserine.

The cofactor is heme b.

It localises to the cytoplasmic vesicle. The protein localises to the secretory vesicle. It is found in the chromaffin granule membrane. It carries out the reaction monodehydro-L-ascorbate radical(out) + L-ascorbate(in) = monodehydro-L-ascorbate radical(in) + L-ascorbate(out). In terms of biological role, transmembrane reductase that uses ascorbate as an electron donor in the cytoplasm and transfers electrons across membranes to reduce monodehydro-L-ascorbate radical in the lumen of secretory vesicles. It is therefore involved the regeneration and homeostasis within secretory vesicles of ascorbate which in turn provides reducing equivalents needed to support the activity of intravesicular enzymes. This Ovis aries (Sheep) protein is Transmembrane ascorbate-dependent reductase CYB561 (CYB561).